A 191-amino-acid polypeptide reads, in one-letter code: Protein phosphatase inhibitor 2 (191 aa).

Over residues 20 to 31 the composition is skewed to basic and acidic residues; that stretch reads ESNKPVRQKITE. Disordered stretches follow at residues 20-52 and 67-191; these read ESNK…RGRA and RNVL…PELI. Serine 45 and serine 47 each carry phosphoserine. The segment covering 93-109 has biased composition (acidic residues); the sequence is SDEEEEEADPMDQDEEG. The segment covering 114–136 has biased composition (basic and acidic residues); the sequence is KNERFNAHRKAHYDEFRKVKELR.

Interacts with protein phosphatase 1. Interacts with TOPP1, SRK2D/SNRK2.2, SRK2I/SNRK2.3, SRK2E/SNRK2.6, SRK2C/SNRK2.8 and PYL11. In terms of processing, phosphorylated in vivo. As to expression, expressed in roots, cotyledons, leaves, flowers and siliques.

It is found in the nucleus. The protein localises to the cytoplasm. Inhibitor of protein-phosphatase 1 (PP1). Binds to and inhibits PP1 activity. Acts as negative regulator of abscisic acid (ABA) signaling. Enhances the inhibition of SRK2E/SNRK2.6 by TOPP1. May promote the interaction between TOPP1 and the ABA receptor PYL11. The polypeptide is Protein phosphatase inhibitor 2 (Arabidopsis thaliana (Mouse-ear cress)).